We begin with the raw amino-acid sequence, 176 residues long: Nucleoside triphosphate/diphosphate phosphatase (176 aa).

The Proton donor role is filled by Arg-23. 6 residues coordinate Mg(2+): Asn-87, Asp-103, Asp-105, Asp-107, Asp-120, and Glu-123.

This sequence belongs to the Ntdp family. Mg(2+) is required as a cofactor.

The catalysed reaction is a ribonucleoside 5'-triphosphate + H2O = a ribonucleoside 5'-diphosphate + phosphate + H(+). It carries out the reaction a ribonucleoside 5'-diphosphate + H2O = a ribonucleoside 5'-phosphate + phosphate + H(+). Its function is as follows. Has nucleoside phosphatase activity towards nucleoside triphosphates and nucleoside diphosphates. The protein is Nucleoside triphosphate/diphosphate phosphatase of Bacillus pumilus (strain SAFR-032).